The chain runs to 61 residues: Beta-insect depressant toxin BaIT2 (61 aa).

One can recognise an LCN-type CS-alpha/beta domain in the interval 1–61 (DGYIRRRDGC…TWKSETNTCG (61 aa)). 4 cysteine pairs are disulfide-bonded: C10–C60, C14–C35, C21–C42, and C25–C44.

The protein belongs to the long (4 C-C) scorpion toxin superfamily. Sodium channel inhibitor family. Beta subfamily. As to expression, expressed by the venom gland.

The protein resides in the secreted. Its function is as follows. Depressant insect beta-toxins cause a transient contraction paralysis followed by a slow flaccid paralysis. They bind voltage-independently at site-4 of sodium channels (Nav) and shift the voltage of activation toward more negative potentials thereby affecting sodium channel activation and promoting spontaneous and repetitive firing. This toxin is active only on insects. The protein is Beta-insect depressant toxin BaIT2 of Buthacus arenicola (North African scorpion).